Here is a 186-residue protein sequence, read N- to C-terminus: Ribosome-recycling factor (186 aa).

The tract at residues 144-163 (EKDGVIGQDESRAQSERVQK) is disordered.

Belongs to the RRF family.

It localises to the cytoplasm. Its function is as follows. Responsible for the release of ribosomes from messenger RNA at the termination of protein biosynthesis. May increase the efficiency of translation by recycling ribosomes from one round of translation to another. This is Ribosome-recycling factor from Rhizobium etli (strain CIAT 652).